The following is a 194-amino-acid chain: Large ribosomal subunit protein uL6z/uL6y (194 aa).

Thr75 is subject to Phosphothreonine.

This sequence belongs to the universal ribosomal protein uL6 family.

This Arabidopsis thaliana (Mouse-ear cress) protein is Large ribosomal subunit protein uL6z/uL6y (RPL9B).